We begin with the raw amino-acid sequence, 1317 residues long: WASH complex subunit 2 (1317 aa).

The segment at 1–219 (MNRTSPDSER…VGSDRGSIVD (219 aa)) is sufficient for interaction with WASHC3, WASHC4 and WASHC5; required for interaction with WASHC1. S157, S159, S204, S205, and S209 each carry phosphoserine. Positions 201–213 (GELSSEEGSVGSD) are enriched in low complexity. The interval 201–630 (GELSSEEGSV…RKSKGELWDS (430 aa)) is disordered. 2 stretches are compositionally biased toward acidic residues: residues 219–232 (DSEE…SDED) and 250–274 (DEEE…EDIE). S284 carries the phosphoserine modification. 2 stretches are compositionally biased toward basic and acidic residues: residues 289-325 (LAAR…RTPP) and 366-376 (DLFRETSRDRP). T323 bears the Phosphothreonine mark. Residues 348–582 (SRGGLFSGQG…QVSSQQPQSQ (235 aa)) are sufficient for interaction with CCDC93. The tract at residues 349–1317 (RGGLFSGQGL…DDPLNAFGSQ (969 aa)) is interaction with VPS35. Residues 358-368 (LFDDEDESDLF) carry the LFa 1 motif. Positions 379 to 399 (APVSEESSSPKPGKKIPAGAV) are enriched in low complexity. A phosphoserine mark is found at S385 and S387. Short sequence motifs (LFa) lie at residues 433–445 (LFDD…DNFF) and 464–473 (IFDDEEGDLF). Polar residues predominate over residues 500-518 (TLPSSKNPKLVSETKTQKG). 2 short sequence motifs (LFa) span residues 519 to 530 (LFSDEEDSEDLF) and 554 to 565 (LFGDEDEEDNLF). Residues S521 and S526 each carry the phosphoserine modification. The span at 529–548 (LFSSQNSSKSKSASLLSSQL) shows a compositional bias: low complexity. Low complexity predominate over residues 569 to 582 (PAKKQVSSQQPQSQ). Positions 583 to 592 (EKPKPSEQPK) are enriched in basic and acidic residues. The LFa 6 motif lies at 599–611 (LFSSDEEDQWNIT). Residues S601 and S602 each carry the phosphoserine modification. Residues 613 to 627 (SHTKLATDRKSKGEL) show a composition bias toward basic and acidic residues. 2 consecutive short sequence motifs (LFa) follow at residues 646-657 (LFEEDDDEADLF) and 673-685 (LFED…SSLF). Residues 667-817 (TQRTSLLFED…GRPKSTGVFQ (151 aa)) are disordered. The residue at position 710 (S710) is a Phosphoserine. Residues 717-744 (VPSRVKSVDVKVGNGKEADVAKVTEKEG) show a composition bias toward basic and acidic residues. A phosphoserine mark is found at S763 and S778. Residues 788 to 810 (EDQSNTHVSKNDAEKGLKTDGRP) show a composition bias toward basic and acidic residues. Short sequence motifs (LFa) lie at residues 815-823 (VFQDEELLF) and 832-838 (DPDVDLF). S853 is modified (phosphoserine). The short motif at 854 to 864 (LFGDDEDYDLF) is the LFa 11 element. 2 disordered regions span residues 867–926 (AKTQ…REPS) and 960–1079 (ELAF…AAPP). Basic and acidic residues predominate over residues 874–906 (PEKKGALKKDRPVSLKNEEAPESTEGSKEKSLW). Positions 912-1317 (QDSSGLTPFK…DDPLNAFGSQ (406 aa)) are interaction with phospholipids. A compositionally biased stretch (basic residues) spans 1003–1021 (NKSRVKVRGKRRPQTRAAR). A required for interaction with F-actin-capping protein subunit alpha (CAPZA1 or CAPZA2 or CAPZA3) region spans residues 1004-1022 (KSRVKVRGKRRPQTRAARR). S1029, S1047, S1064, and S1092 each carry phosphoserine. The LFa 12 signature appears at 1107–1114 (LFDSGDIF). Residues 1119 to 1141 (GSQSMEGTKVKAAETPAHLSGGS) form a disordered region. 6 consecutive short sequence motifs (LFa) follow at residues 1147 to 1161 (VFPA…DDLF), 1177 to 1185 (LLEDEDDLF), 1210 to 1216 (IFEDDIF), 1238 to 1246 (LFDDNIDIF), 1266 to 1275 (VFDDDTDDIF), and 1306 to 1314 (IFDDPLNAF). A phosphoserine mark is found at S1152, S1155, and S1156. Positions 1158–1183 (DDLFQTVKPRPAKKRNPFPLLEDEDD) are disordered. The tract at residues 1277–1317 (SGLQAKKSKPKSQSAEATSELRSDHKVSNIFDDPLNAFGSQ) is disordered. S1316 bears the Phosphoserine mark.

This sequence belongs to the FAM21 family. As to quaternary structure, component of the WASH core complex also described as WASH regulatory complex SHRC composed of WASHC1, WASHC2, WASHC3, WASHC4 and WASHC5; in the complex interacts (via N-terminus) directly with WASHC1. The WASH core complex associates via WASHC2 with the F-actin-capping protein dimer (formed by CAPZA1, CAPZA2 or CAPZA3 and CAPZB) in a transient or substoichiometric manner which was initially described as WASH complex. Interacts with VPS35; mediates the association with the retromer CSC complex. Interacts with FKBP15. Interacts with CCDC93, CCDC22, C16orf62 homolog; indicative for an association of the WASH core complex with the CCC complex. Directly interacts with TBC1D23.

The protein localises to the early endosome membrane. It is found in the cell membrane. Functionally, acts as a component of the WASH core complex that functions as a nucleation-promoting factor (NPF) at the surface of endosomes, where it recruits and activates the Arp2/3 complex to induce actin polymerization, playing a key role in the fission of tubules that serve as transport intermediates during endosome sorting. Mediates the recruitment of the WASH core complex to endosome membranes via binding to phospholipids and VPS35 of the retromer CSC. Mediates the recruitment of the F-actin-capping protein dimer to the WASH core complex probably promoting localized F-actin polymerization needed for vesicle scission. Via its C-terminus binds various phospholipids, most strongly phosphatidylinositol 4-phosphate (PtdIns-(4)P), phosphatidylinositol 5-phosphate (PtdIns-(5)P) and phosphatidylinositol 3,5-bisphosphate (PtdIns-(3,5)P2). Involved in the endosome-to-plasma membrane trafficking and recycling of SNX27-retromer-dependent cargo proteins, such as GLUT1. Required for the association of DNAJC13, ENTR1, ANKRD50 with retromer CSC subunit VPS35. Required for the endosomal recruitment of CCC complex subunits COMMD1, CCDC93 and C16orf62 homolog. The sequence is that of WASH complex subunit 2 from Cricetulus griseus (Chinese hamster).